A 356-amino-acid polypeptide reads, in one-letter code: Phospho-N-acetylmuramoyl-pentapeptide-transferase (356 aa).

10 helical membrane passes run 27 to 47, 73 to 93, 97 to 117, 134 to 154, 163 to 183, 195 to 215, 232 to 252, 258 to 278, 285 to 305, and 333 to 353; these read AAVA…ILML, TMGG…WMDL, FVWA…LDDY, LLVE…RTGT, GIVI…IVGF, GLAT…VYLS, AGEL…FLWF, AVFM…TIAV, VLVL…IQVF, and TVVI…LATL.

Belongs to the glycosyltransferase 4 family. MraY subfamily. The cofactor is Mg(2+).

The protein resides in the cell inner membrane. It carries out the reaction UDP-N-acetyl-alpha-D-muramoyl-L-alanyl-gamma-D-glutamyl-meso-2,6-diaminopimeloyl-D-alanyl-D-alanine + di-trans,octa-cis-undecaprenyl phosphate = di-trans,octa-cis-undecaprenyl diphospho-N-acetyl-alpha-D-muramoyl-L-alanyl-D-glutamyl-meso-2,6-diaminopimeloyl-D-alanyl-D-alanine + UMP. It participates in cell wall biogenesis; peptidoglycan biosynthesis. Catalyzes the initial step of the lipid cycle reactions in the biosynthesis of the cell wall peptidoglycan: transfers peptidoglycan precursor phospho-MurNAc-pentapeptide from UDP-MurNAc-pentapeptide onto the lipid carrier undecaprenyl phosphate, yielding undecaprenyl-pyrophosphoryl-MurNAc-pentapeptide, known as lipid I. This chain is Phospho-N-acetylmuramoyl-pentapeptide-transferase, found in Sphingopyxis alaskensis (strain DSM 13593 / LMG 18877 / RB2256) (Sphingomonas alaskensis).